A 107-amino-acid chain; its full sequence is UPF0060 membrane protein M446_5886 (107 aa).

4 helical membrane-spanning segments follow: residues 4–24 (LLAYALAALAEIAGCFAIWAW), 31–51 (PLWLGPGLASLILFAVLLTRV), 59–79 (AYAAYGGVYVAASLLWLWAAE), and 85–105 (RWDLGGAALCLAGSAVVLLGP).

Belongs to the UPF0060 family.

The protein resides in the cell inner membrane. This chain is UPF0060 membrane protein M446_5886, found in Methylobacterium sp. (strain 4-46).